Reading from the N-terminus, the 155-residue chain is 6,7-dimethyl-8-ribityllumazine synthase (155 aa).

5-amino-6-(D-ribitylamino)uracil is bound by residues phenylalanine 22, alanine 56–glutamate 58, and alanine 80–isoleucine 82. Residue asparagine 85–threonine 86 coordinates (2S)-2-hydroxy-3-oxobutyl phosphate. Residue histidine 88 is the Proton donor of the active site. Residue phenylalanine 113 participates in 5-amino-6-(D-ribitylamino)uracil binding. Arginine 127 is a (2S)-2-hydroxy-3-oxobutyl phosphate binding site.

Belongs to the DMRL synthase family.

The enzyme catalyses (2S)-2-hydroxy-3-oxobutyl phosphate + 5-amino-6-(D-ribitylamino)uracil = 6,7-dimethyl-8-(1-D-ribityl)lumazine + phosphate + 2 H2O + H(+). It functions in the pathway cofactor biosynthesis; riboflavin biosynthesis; riboflavin from 2-hydroxy-3-oxobutyl phosphate and 5-amino-6-(D-ribitylamino)uracil: step 1/2. Functionally, catalyzes the formation of 6,7-dimethyl-8-ribityllumazine by condensation of 5-amino-6-(D-ribitylamino)uracil with 3,4-dihydroxy-2-butanone 4-phosphate. This is the penultimate step in the biosynthesis of riboflavin. In Streptococcus pneumoniae serotype 2 (strain D39 / NCTC 7466), this protein is 6,7-dimethyl-8-ribityllumazine synthase.